Reading from the N-terminus, the 365-residue chain is Short-chain dehydrogenase iccH (365 aa).

Residues Leu16, Arg52, and Asp70 each coordinate NADP(+). Asn90 carries N-linked (GlcNAc...) asparagine glycosylation. The NADP(+) site is built by Asn102, Tyr221, Lys225, and Ser260. Tyr221 serves as the catalytic Proton donor. The active-site Lowers pKa of active site Tyr is Lys225. Residues 267-287 traverse the membrane as a helical segment; it reads IWVMFLLMKFVLPLLAPLAVW. N-linked (GlcNAc...) asparagine glycosylation is found at Asn291 and Asn324.

This sequence belongs to the short-chain dehydrogenases/reductases (SDR) family.

The protein localises to the membrane. It functions in the pathway mycotoxin biosynthesis. In terms of biological role, NADH-dependent flavin oxidoreductase; part of the gene cluster that mediates the biosynthesis of ilicicolin H, a 4-hydroxy-2-pyridonealkaloid that has potent and broad antifungal activities by inhibiting the mitochondrial respiration chain. IccA to iccE are sufficient for ilicicolin H biosynthesis and the roles of the remaining enzymes, iccF, iccG and iccH within the pathway have still to be determined. The biosynthesis of ilicicolin H starts with formation of the tetramic acid by the hybrid PKS-NRPS synthetase iccA with the partnering trans-enoyl reductase iccB since iccA lacks a designated enoylreductase (ER) domain. The cytochrome P450 monooxygenase iccC then catalyzes the ring expansion of the tetramate to the acyclic 2-pyridone. The pericyclase iccD further converts the acyclic 2-pyridone into 8-epi-ilicicolin H. Finally, the epimerase iccE converts 8-epi-ilicicolin H into ilicicolin H via epimerizationd. The sequence is that of Short-chain dehydrogenase iccH from Talaromyces variabilis (Penicillium variabile).